The sequence spans 67 residues: Penaeidin-4a (67 aa).

The N-terminal stretch at 1-19 (MRLVVCLVFLASFALVCQG) is a signal peptide. 3 disulfide bridges follow: Cys42-Cys56, Cys45-Cys63, and Cys57-Cys64. Arginine amide is present on Arg66.

It belongs to the penaeidin family.

Its subcellular location is the cytoplasmic granule. In terms of biological role, antibacterial and antifungal activity. Presents chitin-binding activity. The polypeptide is Penaeidin-4a (Penaeus vannamei (Whiteleg shrimp)).